The following is a 204-amino-acid chain: 3-isopropylmalate dehydratase small subunit (204 aa).

The protein belongs to the LeuD family. LeuD type 1 subfamily. Heterodimer of LeuC and LeuD.

The enzyme catalyses (2R,3S)-3-isopropylmalate = (2S)-2-isopropylmalate. It functions in the pathway amino-acid biosynthesis; L-leucine biosynthesis; L-leucine from 3-methyl-2-oxobutanoate: step 2/4. Catalyzes the isomerization between 2-isopropylmalate and 3-isopropylmalate, via the formation of 2-isopropylmaleate. The protein is 3-isopropylmalate dehydratase small subunit of Roseiflexus sp. (strain RS-1).